A 96-amino-acid polypeptide reads, in one-letter code: Tenecin-3 (96 aa).

The first 18 residues, 1 to 18 (MKTFVICLILVVAVSAAP), serve as a signal peptide directing secretion. A disordered region spans residues 19 to 96 (DHHDGHLGGH…HQGGYKTHGH (78 aa)). 12 consecutive repeat copies span residues 23 to 26 (GHLG), 31 to 34 (GHQG), 35 to 38 (GQQG), 39 to 42 (GHLG), 43 to 46 (GQQG), 47 to 50 (GHLG), 51 to 54 (GHQG), 59 to 62 (GHLG), 63 to 66 (GHQG), 67 to 70 (GIGG), 77 to 80 (GQHG), and 86 to 89 (GHQG). The tract at residues 23 to 89 (GHLGGHQTGH…GPGTGAGHQG (67 aa)) is 12 X 4 AA repeats of G-X-X-G. A compositionally biased stretch (gly residues) spans 26–89 (GGHQTGHQGG…GPGTGAGHQG (64 aa)).

This sequence to H.diomphalia holotricin 3.

The protein localises to the secreted. Its function is as follows. Antifungal heat stable protein produced in response to injury. It is active against C.albicans. No antibacterial activity against Gram-positive and Gram-negative bacteria. The protein is Tenecin-3 of Tenebrio molitor (Yellow mealworm beetle).